A 170-amino-acid chain; its full sequence is Peptide deformylase (170 aa).

Fe cation-binding residues include C91 and H133. The active site involves E134. Residue H137 coordinates Fe cation.

It belongs to the polypeptide deformylase family. Requires Fe(2+) as cofactor.

It catalyses the reaction N-terminal N-formyl-L-methionyl-[peptide] + H2O = N-terminal L-methionyl-[peptide] + formate. Removes the formyl group from the N-terminal Met of newly synthesized proteins. Requires at least a dipeptide for an efficient rate of reaction. N-terminal L-methionine is a prerequisite for activity but the enzyme has broad specificity at other positions. This chain is Peptide deformylase, found in Aliivibrio fischeri (strain ATCC 700601 / ES114) (Vibrio fischeri).